A 33-amino-acid polypeptide reads, in one-letter code: Brevinin-2PTe (33 aa).

A disulfide bridge links Cys27 with Cys33.

In terms of tissue distribution, expressed by the skin glands.

The protein localises to the secreted. Has antibacterial activity against the Gram-positive bacterium S.aureus ATCC 25923 (MIC=36 uM) and the Gram-negative bacterium E.coli ATCC 25726 (MIC=18 uM). In Pulchrana picturata (Malaysian fire frog), this protein is Brevinin-2PTe.